We begin with the raw amino-acid sequence, 283 residues long: Interferon alpha-inducible protein 27-like protein 2B (283 aa).

A mitochondrion-targeting transit peptide spans 1–90 (MKRKFVGAAI…AVGTATGARA (90 aa)). The tract at residues 90–120 (AEGSMGASREQESGPQDPPQELQEPQEPPSC) is disordered. 3 consecutive transmembrane segments (helical) span residues 130 to 150 (FVGAAIGGALAVAGAPIALSA), 176 to 196 (GGGIAAGGLVATLQSVGILGL), and 202 to 222 (IILGAVGAATGATAAGAMGAC). The interval 227-283 (PGLQDLQQEPKEPQEPQELQKQQEPQEPQELQKQQETQETQETQELQKTQEPPSYEK) is disordered. Residues 242–283 (PQELQKQQEPQEPQELQKQQETQETQETQELQKTQEPPSYEK) show a composition bias toward low complexity.

The protein belongs to the IFI6/IFI27 family. Homooligomer. Interacts with BAK1. Interacts with BAX. Interacts with adenine nucleotide translocase.

Its subcellular location is the mitochondrion inner membrane. In terms of biological role, functions in the intrinsic apoptotic signaling pathway and may have an interferon-induced antiviral activity. The polypeptide is Interferon alpha-inducible protein 27-like protein 2B (Mus musculus (Mouse)).